A 139-amino-acid chain; its full sequence is Cystatin-11 (139 aa).

The N-terminal stretch at 1-28 is a signal peptide; sequence MAAGSWKATRLLLAILVALVAFSYQVKR. 2 cysteine pairs are disulfide-bonded: cysteine 94–cysteine 102 and cysteine 115–cysteine 135. N-linked (GlcNAc...) asparagine glycosylation occurs at asparagine 134.

Belongs to the cystatin family. Expressed in epididymis, where it localizes to the proximal caput and also part of the midcaput. Not detected in other tissues tested.

Its subcellular location is the secreted. Its function is as follows. Has antibacterial activity against the Gram-negative bacteria E.coli. May play a role in sperm maturation and fertilization. In Mus musculus (Mouse), this protein is Cystatin-11.